A 678-amino-acid chain; its full sequence is MMGCGFHFPWFFFLIIGLQAPLSLSLTSQGSALLKFRARVNSDPHGTLANWNVSGINDLCYWSGVTCVDGKVQILDLSGYSLEGTLAPELSQLSDLRSLILSRNHFSGGIPKEYGSFENLEVLDLRENDLSGQIPPELSNGLSLKHLLLSGNKFSDDMRIKIVRLQSSYEVRLKKSPKLSPLAVLGCINRKLGHCVSRNRIIQVKKVEAIVFRIKATSRRFLKAFPSFLEETDIYKRRELLEETSNLAAEPAPSAPSPSPGIITEASPRSSGSFPAVTNAKKRRPPLVPPVPSPDKGSTSPDISKNQPQDNKQSKGSKHVWLYVVIAVASFVGLLIIVAVIFFCRKRAVKSIGPWKTGLSGQLQKAFVTGVPKLNRSELETACEDFSNIIETFDGYTVYKGTLSSGVEIAVASTAIAESKEWTRAMEMAYRRKIDTLSRINHKNFVNLIGYCEEDDPFNRMMVFEYAPNGTLFEHLHDKETEHLDWSARMRIIMGTAYCLQHMHGMNPPMAHTDFNSSEIYLTDDYAAKVSEIPFNLEARLNPKKHVSGDLEQTSLLLPPEPEANVHSFGVLMLEIISGKLSFSDEYGSIEQWASKYLEKDDLGEMIDPSLKTFKEEELEVICDVIRECLKTEQRQRPSMKDVAEQLKQVINITPEKATPRSSPLWWAELEILSSEAT.

A signal peptide spans Met1–Ser25. The Extracellular portion of the chain corresponds to Leu26–Tyr323. Residue Asn52 is glycosylated (N-linked (GlcNAc...) asparagine). LRR repeat units lie at residues Lys71–Ser94, Asp95–Phe117, Asn119–Gly141, and Ser143–Arg164. The disordered stretch occupies residues Leu247–Ser314. Over residues Lys296–Asn311 the composition is skewed to polar residues. The chain crosses the membrane as a helical span at residues Val324–Cys344. At Arg345–Thr678 the chain is on the cytoplasmic side. Residues Lys346–Ile651 enclose the Protein kinase domain.

The protein belongs to the protein kinase superfamily. Ser/Thr protein kinase family. Expressed in pollen tubes and seedlings.

It localises to the endomembrane system. The enzyme catalyses L-seryl-[protein] + ATP = O-phospho-L-seryl-[protein] + ADP + H(+). The catalysed reaction is L-threonyl-[protein] + ATP = O-phospho-L-threonyl-[protein] + ADP + H(+). Involved in the pollen tube perception of the female signal by binding an unidentified female attractant. May be involved in the regulation of root hairs development. In Arabidopsis thaliana (Mouse-ear cress), this protein is Protein MALE DISCOVERER 2 (MDIS2).